A 455-amino-acid polypeptide reads, in one-letter code: DENN domain-containing protein 11 (455 aa).

Positions 1 to 59 (MVEQGDAAPLLRWAEGPAVSVPQDPALQAGGWVRGGSGEGRVAAEAPRRREPDEPAPPE) are disordered. Val-2 bears the N-acetylvaline mark. The uDENN domain occupies 15-187 (EGPAVSVPQD…QLEMPGHYSH (173 aa)). At Arg-41 the chain carries Omega-N-methylarginine. One can recognise a cDENN domain in the interval 214–362 (WLPSIHRYMY…INSADREKYR (149 aa)). A dDENN domain is found at 364 to 455 (LNEQRQMLLY…MLVIDNPCCP (92 aa)).

It belongs to the DENND11 family.

Probable guanine nucleotide exchange factor (GEF). May promote the exchange of GDP to GTP, converting inactive GDP-bound small GTPases into their active GTP-bound form. May play a role in neuritogenesis, as well as in neuronal recovery and/or restructuring in the hippocampus following transient cerebral ischemia. The chain is DENN domain-containing protein 11 (Dennd11) from Mus musculus (Mouse).